The primary structure comprises 428 residues: Serine hydroxymethyltransferase (428 aa).

(6S)-5,6,7,8-tetrahydrofolate is bound by residues leucine 127 and 131 to 133; that span reads GHL. Lysine 236 carries the post-translational modification N6-(pyridoxal phosphate)lysine.

This sequence belongs to the SHMT family. In terms of assembly, homodimer. Pyridoxal 5'-phosphate is required as a cofactor.

It is found in the cytoplasm. The enzyme catalyses (6R)-5,10-methylene-5,6,7,8-tetrahydrofolate + glycine + H2O = (6S)-5,6,7,8-tetrahydrofolate + L-serine. It functions in the pathway one-carbon metabolism; tetrahydrofolate interconversion. The protein operates within amino-acid biosynthesis; glycine biosynthesis; glycine from L-serine: step 1/1. Catalyzes the reversible interconversion of serine and glycine with tetrahydrofolate (THF) serving as the one-carbon carrier. This reaction serves as the major source of one-carbon groups required for the biosynthesis of purines, thymidylate, methionine, and other important biomolecules. Also exhibits THF-independent aldolase activity toward beta-hydroxyamino acids, producing glycine and aldehydes, via a retro-aldol mechanism. This chain is Serine hydroxymethyltransferase, found in Tropheryma whipplei (strain TW08/27) (Whipple's bacillus).